The primary structure comprises 268 residues: Phosphatidylglycerol--prolipoprotein diacylglyceryl transferase (268 aa).

The next 4 helical transmembrane spans lie at Leu14 to Trp34, Leu57 to Tyr77, Phe90 to Phe110, and Ile117 to Gly137. Position 140 (Arg140) interacts with a 1,2-diacyl-sn-glycero-3-phospho-(1'-sn-glycerol). 3 consecutive transmembrane segments (helical) span residues Gln174–Ile194, Tyr200–Phe220, and Gly238–Ile258.

This sequence belongs to the Lgt family.

It is found in the cell inner membrane. It catalyses the reaction L-cysteinyl-[prolipoprotein] + a 1,2-diacyl-sn-glycero-3-phospho-(1'-sn-glycerol) = an S-1,2-diacyl-sn-glyceryl-L-cysteinyl-[prolipoprotein] + sn-glycerol 1-phosphate + H(+). It functions in the pathway protein modification; lipoprotein biosynthesis (diacylglyceryl transfer). In terms of biological role, catalyzes the transfer of the diacylglyceryl group from phosphatidylglycerol to the sulfhydryl group of the N-terminal cysteine of a prolipoprotein, the first step in the formation of mature lipoproteins. This Francisella tularensis subsp. novicida (strain U112) protein is Phosphatidylglycerol--prolipoprotein diacylglyceryl transferase.